Reading from the N-terminus, the 338-residue chain is Lipoate-protein ligase A (338 aa).

In terms of domain architecture, BPL/LPL catalytic spans 29–216 (PATQRVLFLW…AFFEHYSERV (188 aa)). Residues arginine 71, 76–79 (GAVF), and lysine 134 contribute to the ATP site. Lysine 134 serves as a coordination point for (R)-lipoate.

Belongs to the LplA family. In terms of assembly, monomer.

The protein resides in the cytoplasm. It catalyses the reaction L-lysyl-[lipoyl-carrier protein] + (R)-lipoate + ATP = N(6)-[(R)-lipoyl]-L-lysyl-[lipoyl-carrier protein] + AMP + diphosphate + H(+). The protein operates within protein modification; protein lipoylation via exogenous pathway; protein N(6)-(lipoyl)lysine from lipoate: step 1/2. It functions in the pathway protein modification; protein lipoylation via exogenous pathway; protein N(6)-(lipoyl)lysine from lipoate: step 2/2. In terms of biological role, catalyzes both the ATP-dependent activation of exogenously supplied lipoate to lipoyl-AMP and the transfer of the activated lipoyl onto the lipoyl domains of lipoate-dependent enzymes. The protein is Lipoate-protein ligase A of Enterobacter sp. (strain 638).